The chain runs to 507 residues: AMP phosphorylase (507 aa).

AMP-binding positions include G168, 194–199 (SRAITG), and T203. Catalysis depends on D256, which acts as the Proton donor. S264 and K288 together coordinate AMP.

It belongs to the thymidine/pyrimidine-nucleoside phosphorylase family. Type 2 subfamily.

It carries out the reaction AMP + phosphate = alpha-D-ribose 1,5-bisphosphate + adenine. It catalyses the reaction CMP + phosphate = cytosine + alpha-D-ribose 1,5-bisphosphate. The enzyme catalyses UMP + phosphate = alpha-D-ribose 1,5-bisphosphate + uracil. Catalyzes the conversion of AMP and phosphate to adenine and ribose 1,5-bisphosphate (R15P). Exhibits phosphorylase activity toward CMP and UMP in addition to AMP. Functions in an archaeal AMP degradation pathway, together with R15P isomerase and RubisCO. In Methanosarcina mazei (strain ATCC BAA-159 / DSM 3647 / Goe1 / Go1 / JCM 11833 / OCM 88) (Methanosarcina frisia), this protein is AMP phosphorylase.